The following is an 89-amino-acid chain: Ubiquinol-cytochrome-c reductase complex assembly factor 3 (89 aa).

The Mitochondrial matrix portion of the chain corresponds to 1 to 7; the sequence is MEVARKA. The chain crosses the membrane as a helical span at residues 8–28; that stretch reads LVAVAVLGGGAGVGSILFALV. Residues 23–80 form a mediates lipid-binding region; sequence ILFALVTPGELQKQSMLQEMPERDSRRRDEAVRTTELVMATLKDAAATKENVAWRRNW. The Mitochondrial intermembrane segment spans residues 29-89; that stretch reads TPGELQKQSM…WTVSGDGRSA (61 aa).

This sequence belongs to the UQCC3 family. In terms of assembly, associates with the ubiquinol-cytochrome c reductase complex (mitochondrial respiratory chain complex III(CIII) or cytochrome b-c1 complex). Interacts with UQCC1. Forms a complex, named COMC, composed of UQCC1, UQCC2; UQCC3 and UQCC4; mediates MT-CYB hemylation and association with the first nuclear-encoded complex III subunit UQCRQ. Post-translationally, probably cleaved by OMA1 under mitochondrial stress conditions.

It localises to the mitochondrion inner membrane. Its function is as follows. Required for the assembly of the ubiquinol-cytochrome c reductase complex (mitochondrial respiratory chain complex III or cytochrome b-c1 complex), mediating cytochrome b recruitment and probably stabilization within the complex. Thereby, plays an important role in ATP production by mitochondria. Cardiolipin-binding protein, it may also control the cardiolipin composition of mitochondria membranes and their morphology. This is Ubiquinol-cytochrome-c reductase complex assembly factor 3 from Mus musculus (Mouse).